The sequence spans 95 residues: Aspartyl/glutamyl-tRNA(Asn/Gln) amidotransferase subunit C (95 aa).

Belongs to the GatC family. Heterotrimer of A, B and C subunits.

The catalysed reaction is L-glutamyl-tRNA(Gln) + L-glutamine + ATP + H2O = L-glutaminyl-tRNA(Gln) + L-glutamate + ADP + phosphate + H(+). The enzyme catalyses L-aspartyl-tRNA(Asn) + L-glutamine + ATP + H2O = L-asparaginyl-tRNA(Asn) + L-glutamate + ADP + phosphate + 2 H(+). Functionally, allows the formation of correctly charged Asn-tRNA(Asn) or Gln-tRNA(Gln) through the transamidation of misacylated Asp-tRNA(Asn) or Glu-tRNA(Gln) in organisms which lack either or both of asparaginyl-tRNA or glutaminyl-tRNA synthetases. The reaction takes place in the presence of glutamine and ATP through an activated phospho-Asp-tRNA(Asn) or phospho-Glu-tRNA(Gln). The chain is Aspartyl/glutamyl-tRNA(Asn/Gln) amidotransferase subunit C from Rhodospirillum rubrum (strain ATCC 11170 / ATH 1.1.1 / DSM 467 / LMG 4362 / NCIMB 8255 / S1).